Consider the following 104-residue polypeptide: Flagellar hook-basal body complex protein FliE (104 aa).

The protein belongs to the FliE family.

The protein localises to the bacterial flagellum basal body. The protein is Flagellar hook-basal body complex protein FliE of Salmonella arizonae (strain ATCC BAA-731 / CDC346-86 / RSK2980).